A 535-amino-acid polypeptide reads, in one-letter code: Flavin-containing monooxygenase 2 (535 aa).

Position 2 is an N-acetylalanine (A2). Residues 9–13 (GAGVS), E32, 40–41 (VW), and 61–62 (NT) each bind FAD. NADP(+)-binding positions include 60 to 61 (TN) and 195 to 198 (SGSD). A Glycyl lysine isopeptide (Lys-Gly) (interchain with G-Cter in SUMO) cross-link involves residue K492. A helical transmembrane segment spans residues 510–530 (FSVSFLLKILGLLAVVVAFFC).

The protein belongs to the FMO family. Requires FAD as cofactor. Mg(2+) is required as a cofactor. In terms of tissue distribution, expressed in lung (at protein level). Expressed predominantly in lung, and at a much lesser extent in kidney. Also expressed in fetal lung, but not in liver, kidney and brain.

The protein localises to the microsome membrane. Its subcellular location is the endoplasmic reticulum membrane. Functionally, catalyzes the oxidative metabolism of numerous xenobiotics, including mainly therapeutic drugs and insecticides that contain a soft nucleophile, most commonly nitrogen and sulfur and participates to their bioactivation. Specifically catalyzes S-oxygenation of sulfur derived compounds such as thioureas-derived compounds, thioetherorganophosphates to their sulfenic acid. In vitro, catalyzes S-oxygenation of the second-line antitubercular drugs thiacetazone (TAZ) and ethionamide (ETA), forming a sulfinic acid and a carbodiimide via a postulated sulfenic acid intermediate. Also catalyzes S-oxygenation of the thioether-containing organophosphate insecticides, phorate and disulfoton. The protein is Flavin-containing monooxygenase 2 of Homo sapiens (Human).